Consider the following 91-residue polypeptide: Small ribosomal subunit protein uS19 (91 aa).

The protein belongs to the universal ribosomal protein uS19 family.

Protein S19 forms a complex with S13 that binds strongly to the 16S ribosomal RNA. The polypeptide is Small ribosomal subunit protein uS19 (Prochlorococcus marinus (strain NATL1A)).